The following is a 377-amino-acid chain: Pseudouridylate synthase RPUSD4, mitochondrial (377 aa).

Residues 1–46 (MAAPCLRTPGVQLLSMSSRPGRLFTPGSWSFCSSATSSRPLNAQRL) constitute a mitochondrion transit peptide. Asp-153 is an active-site residue.

The protein belongs to the pseudouridine synthase RluA family. Interacts with 16S mt-rRNA, mt-tRNA(Phe) and mt-tRNA(Met). Forms a regulatory protein-RNA complex, consisting of RCC1L, NGRN, RPUSD3, RPUSD4, TRUB2, FASTKD2 and 16S mt-rRNA.

The protein localises to the mitochondrion matrix. The protein resides in the nucleus. It is found in the cytoplasm. The catalysed reaction is uridine in 5S rRNA = pseudouridine in 5S rRNA. It carries out the reaction a uridine in tRNA = a pseudouridine in tRNA. The enzyme catalyses a uridine in mRNA = a pseudouridine in mRNA. Its function is as follows. Catalyzes uridine to pseudouridine isomerization (pseudouridylation) of different mitochondrial RNA substrates. Acts on position 1397 in 16S mitochondrial ribosomal RNA (16S mt-rRNA). This modification is required for the assembly of 16S mt-rRNA into a functional mitochondrial ribosome. As a component of a functional protein-RNA module, consisting of RCC1L, NGRN, RPUSD3, RPUSD4, TRUB2, FASTKD2 and 16S mt-rRNA, controls 16S mt-rRNA abundance and is required for intra-mitochondrial translation. Acts on position 39 in mitochondrial tRNA(Phe). Also catalyzes pseudouridylation of mRNAs in nucleus: acts as a regulator of pre-mRNA splicing by mediating pseudouridylation of pre-mRNAs at locations associated with alternatively spliced regions. Pseudouridylation of pre-mRNAs near splice sites directly regulates mRNA splicing and mRNA 3'-end processing. In Mus musculus (Mouse), this protein is Pseudouridylate synthase RPUSD4, mitochondrial.